Reading from the N-terminus, the 137-residue chain is 2-iminobutanoate/2-iminopropanoate deaminase (137 aa).

The residue at position 2 (Ser-2) is an N-acetylserine. N6-succinyllysine is present on residues Lys-13, Lys-60, and Lys-67. The residue at position 74 (Thr-74) is a Phosphothreonine.

This sequence belongs to the RutC family. In terms of assembly, homotrimer. Interacts with YTHDF2. As to expression, liver and kidney.

It localises to the cytoplasm. Its subcellular location is the nucleus. The protein localises to the peroxisome. It is found in the mitochondrion. It carries out the reaction 2-iminobutanoate + H2O = 2-oxobutanoate + NH4(+). It catalyses the reaction 2-iminopropanoate + H2O = pyruvate + NH4(+). Catalyzes the hydrolytic deamination of enamine/imine intermediates that form during the course of normal metabolism. May facilitate the release of ammonia from these potentially toxic reactive metabolites, reducing their impact on cellular components. It may act on enamine/imine intermediates formed by several types of pyridoxal-5'-phosphate-dependent dehydratases including L-threonine dehydratase. Its function is as follows. Also promotes endoribonucleolytic cleavage of some transcripts by promoting recruitment of the ribonuclease P/MRP complex. Acts by bridging YTHDF2 and the ribonuclease P/MRP complex. RIDA/HRSP12 binds to N6-methyladenosine (m6A)-containing mRNAs containing a 5'-GGUUC-3' motif: cooperative binding of RIDA/HRSP12 and YTHDF2 to such transcripts lead to recruitment of the ribonuclease P/MRP complex and subsequent endoribonucleolytic cleavage. In Rattus norvegicus (Rat), this protein is 2-iminobutanoate/2-iminopropanoate deaminase.